A 189-amino-acid chain; its full sequence is dCTP deaminase, dUMP-forming (189 aa).

Residues 101–106, aspartate 119, 127–129, glutamine 148, tyrosine 162, lysine 170, and glutamine 174 contribute to the dCTP site; these read KSSLGR and TLE. Glutamate 129 (proton donor/acceptor) is an active-site residue. A disordered region spans residues 163-189; it reads GSGKLGSKYQGQRGPTPSKAYLNFPNK.

The protein belongs to the dCTP deaminase family. Homotrimer.

The enzyme catalyses dCTP + 2 H2O = dUMP + NH4(+) + diphosphate. The protein operates within pyrimidine metabolism; dUMP biosynthesis; dUMP from dCTP: step 1/1. In terms of biological role, bifunctional enzyme that catalyzes both the deamination of dCTP to dUTP and the hydrolysis of dUTP to dUMP without releasing the toxic dUTP intermediate. This Corynebacterium glutamicum (strain R) protein is dCTP deaminase, dUMP-forming.